Reading from the N-terminus, the 715-residue chain is Scinderin (715 aa).

An actin-severing region spans residues 1–363; that stretch reads MARELYHEEF…DGFGKVYVTE (363 aa). Residues 27–76 form a Gelsolin-like 1 repeat; sequence LELVPVPQSAHGDFYVGDAYLVLHTAKTSRGFTYHLHFWLGKECSQDEST. Position 102 is a phosphotyrosine (Y102). Residues 112–119 and 138–146 contribute to the a 1,2-diacyl-sn-glycero-3-phospho-(1D-myo-inositol-4,5-bisphosphate) site; these read KGGLKYKA and RLLHVKGRR. 4 Gelsolin-like repeats span residues 148–188, 265–307, 398–451, and 523–564; these read VRAT…YERL, VVAE…QERK, VEIW…DELT, and TRIV…EEEK. Residues 364–715 are ca(2+)-dependent actin binding; it reads KVAQIKQIPF…WFLGWDSSKW (352 aa). Positions 538, 539, and 562 each coordinate Ca(2+). A Phosphotyrosine modification is found at Y599. Residues 626 to 668 form a Gelsolin-like 6 repeat; sequence FVIEEIPGEFTQDDLAEDDVMLLDAWEQIFIWIGKDANEVEKK. Ca(2+)-binding residues include D643, D644, and E666.

It belongs to the villin/gelsolin family. As to expression, expressed in megakaryocytes.

The protein localises to the cytoplasm. Its subcellular location is the cytoskeleton. The protein resides in the cell projection. It is found in the podosome. Functionally, ca(2+)-dependent actin filament-severing protein that has a regulatory function in exocytosis by affecting the organization of the microfilament network underneath the plasma membrane. Severing activity is inhibited by phosphatidylinositol 4,5-bis-phosphate (PIP2). In vitro, also has barbed end capping and nucleating activities in the presence of Ca(2+). Required for megakaryocyte differentiation, maturation, polyploidization and apoptosis with the release of platelet-like particles. Plays a role in osteoclastogenesis (OCG) and actin cytoskeletal organization in osteoclasts. Regulates chondrocyte proliferation and differentiation. Inhibits cell proliferation and tumorigenesis. Signaling is mediated by MAPK, p38 and JNK pathways. In Homo sapiens (Human), this protein is Scinderin.